Consider the following 216-residue polypeptide: Cytidylate kinase (216 aa).

Residue G7–T15 coordinates ATP.

This sequence belongs to the cytidylate kinase family. Type 1 subfamily.

Its subcellular location is the cytoplasm. The catalysed reaction is CMP + ATP = CDP + ADP. It carries out the reaction dCMP + ATP = dCDP + ADP. This Chlamydia caviae (strain ATCC VR-813 / DSM 19441 / 03DC25 / GPIC) (Chlamydophila caviae) protein is Cytidylate kinase.